Reading from the N-terminus, the 410-residue chain is DNA replication and repair protein RecF (410 aa).

30 to 37 (GPNGHGKT) is a binding site for ATP.

The protein belongs to the RecF family.

The protein localises to the cytoplasm. The RecF protein is involved in DNA metabolism; it is required for DNA replication and normal SOS inducibility. RecF binds preferentially to single-stranded, linear DNA. It also seems to bind ATP. The polypeptide is DNA replication and repair protein RecF (Rhodococcus jostii (strain RHA1)).